Here is a 115-residue protein sequence, read N- to C-terminus: Guanylin (115 aa).

The first 21 residues, 1–21 (MNACVLSVLCLLGAVAVLVEG), serve as a signal peptide directing secretion. Positions 22–100 (VTVQDGDLSF…LQRLEAIAQD (79 aa)) are excised as a propeptide. 3 disulfides stabilise this stretch: cysteine 69/cysteine 82, cysteine 104/cysteine 112, and cysteine 107/cysteine 115.

The protein belongs to the guanylin family.

The protein resides in the secreted. Its function is as follows. Endogenous activator of intestinal guanylate cyclase. It stimulates this enzyme through the same receptor binding region as the heat-stable enterotoxins. This is Guanylin (GUCA2A) from Notomys alexis (Spinifex hopping mouse).